A 159-amino-acid chain; its full sequence is Large ribosomal subunit protein uL11 (159 aa).

The protein belongs to the universal ribosomal protein uL11 family. In terms of assembly, part of the ribosomal stalk of the 50S ribosomal subunit. Interacts with L10 and the large rRNA to form the base of the stalk. L10 forms an elongated spine to which L12 dimers bind in a sequential fashion forming a multimeric L10(L12)X complex.

Its function is as follows. Forms part of the ribosomal stalk which helps the ribosome interact with GTP-bound translation factors. The polypeptide is Large ribosomal subunit protein uL11 (Methanothrix thermoacetophila (strain DSM 6194 / JCM 14653 / NBRC 101360 / PT) (Methanosaeta thermophila)).